The chain runs to 440 residues: Kinetochore protein NUF2 homolog (440 aa).

Coiled coils occupy residues leucine 142–glutamine 239 and isoleucine 299–asparagine 386.

This sequence belongs to the NUF2 family. In terms of assembly, component of the NDC80 complex, which consists of NDC80, NUF2, SPC24 and SPC25.

It localises to the chromosome. Its subcellular location is the centromere. Acts as a component of the essential kinetochore-associated NDC80 complex, which is required for chromosome segregation and spindle checkpoint activity to ensure proper cell division. This Arabidopsis thaliana (Mouse-ear cress) protein is Kinetochore protein NUF2 homolog.